Reading from the N-terminus, the 249-residue chain is MPALAIIGDTLLNASLIDKYTPPSSNAQNQGFTTYVHSVKPLIPQIIGIPEDALKQWTLFTDWAKLNDIDLNADETFKEILTIGKRLVSGDITQFVYRQFRGKLEVGYFGKTDNVREKPSFFPLLGAGQIESLKDLLSRHFEVWVYFAPKPVIDWMIRHEIDLATVEFDVRNMLKMLSNNPIKWETLLEKIANVAESRITADRDEVGEWRPWVIGLLMIFGQSLKIGGLMAVLKWRQLGPVCYRNLSRV.

This is an uncharacterized protein from Colorado tick fever virus (strain USA/Florio N-7180) (CTFV).